A 450-amino-acid chain; its full sequence is tRNA-2-methylthio-N(6)-dimethylallyladenosine synthase (450 aa).

In terms of domain architecture, MTTase N-terminal spans 17-131 (KKFFVKTYGC…LNHVLDEVLA (115 aa)). The [4Fe-4S] cluster site is built by Cys-26, Cys-62, Cys-94, Cys-168, Cys-172, and Cys-175. The Radical SAM core domain occupies 154-385 (REDQIKAYVS…LQLQDTIYMK (232 aa)). In terms of domain architecture, TRAM spans 388 to 450 (QAFLGQTVEV…SHQTLLGDLQ (63 aa)).

It belongs to the methylthiotransferase family. MiaB subfamily. As to quaternary structure, monomer. [4Fe-4S] cluster is required as a cofactor.

The protein localises to the cytoplasm. It catalyses the reaction N(6)-dimethylallyladenosine(37) in tRNA + (sulfur carrier)-SH + AH2 + 2 S-adenosyl-L-methionine = 2-methylsulfanyl-N(6)-dimethylallyladenosine(37) in tRNA + (sulfur carrier)-H + 5'-deoxyadenosine + L-methionine + A + S-adenosyl-L-homocysteine + 2 H(+). Functionally, catalyzes the methylthiolation of N6-(dimethylallyl)adenosine (i(6)A), leading to the formation of 2-methylthio-N6-(dimethylallyl)adenosine (ms(2)i(6)A) at position 37 in tRNAs that read codons beginning with uridine. The sequence is that of tRNA-2-methylthio-N(6)-dimethylallyladenosine synthase from Protochlamydia amoebophila (strain UWE25).